The chain runs to 1978 residues: Sodium channel protein type 8 subunit alpha (1978 aa).

Disordered regions lie at residues 1-20 (MAAR…FTPE) and 28-62 (RIAE…LEAG). Residues 1-132 (MAARVLAPPG…RIAIKILIHS (132 aa)) are Cytoplasmic-facing. The segment covering 28–61 (RIAESKLKKPPKADGSHREDDEDSKPKPNSDLEA) has biased composition (basic and acidic residues). Residues 114 to 442 (ILSPFNLIRR…KAMLEQLKKQ (329 aa)) form an I repeat. The helical transmembrane segment at 133–151 (VFSMIIMCTILTNCVFMTF) threads the bilayer. Over 152–158 (SNPPEWS) the chain is Extracellular. Residues 159–179 (KNVEYTFTGIYTFESLVKIIA) form a helical membrane-spanning segment. The Cytoplasmic portion of the chain corresponds to 180–193 (RGFCIDGFTFLRDP). The chain crosses the membrane as a helical span at residues 194–211 (WNWLDFSVIMMAYVTEFV). Residues 212–217 (DLGNVS) lie on the Extracellular side of the membrane. N-linked (GlcNAc...) asparagine glycosylation occurs at Asn-215. The helical transmembrane segment at 218–234 (ALRTFRVLRALKTISVI) threads the bilayer. Residues 235–253 (PGLKTIVGALIQSVKKLSD) lie on the Cytoplasmic side of the membrane. A helical transmembrane segment spans residues 254–273 (VMILTVFCLSVFALIGLQLF). The Extracellular segment spans residues 274–355 (MGNLRNKCVV…PNYGYTSFDT (82 aa)). Cys-281 and Cys-333 are joined by a disulfide. N-linked (GlcNAc...) asparagine glycans are attached at residues Asn-289, Asn-295, Asn-308, and Asn-326. The pore-forming intramembrane region spans 356-380 (FSWAFLALFRLMTQDYWENLYQLTL). Glu-373 serves as a coordination point for Na(+). The Extracellular portion of the chain corresponds to 381 to 387 (RAAGKTY). The chain crosses the membrane as a helical span at residues 388–408 (MIFFVLVIFVGSFYLVNLILA). Over 409–751 (VVAMAYEEQN…EIVNLIVMDP (343 aa)) the chain is Cytoplasmic. Disordered regions lie at residues 446 to 530 (AQAA…KAFR) and 576 to 597 (DPGS…SEGR). Low complexity predominate over residues 473 to 486 (SPRSSSELSKLSSK). Residues 489–500 (KERRNRRKKRKQ) show a composition bias toward basic residues. Basic and acidic residues-rich tracts occupy residues 501 to 530 (KELS…KAFR) and 586 to 597 (DEHSTVEESEGR). A phosphoserine mark is found at Ser-518 and Ser-520. The II repeat unit spans residues 733-1005 (CHPYWIKLKE…QISVIRIKKG (273 aa)). Residues 752-770 (FVDLAITICIVLNTLFMAM) traverse the membrane as a helical segment. The Extracellular segment spans residues 771–781 (EHHPMTPQFEH). The helical transmembrane segment at 782–801 (VLAVGNLVFTGIFTAEMFLK) threads the bilayer. Residues 802–815 (LIAMDPYYYFQEGW) lie on the Cytoplasmic side of the membrane. Residues 816 to 835 (NIFDGFIVSLSLMELGLADV) form a helical membrane-spanning segment. Over 836–837 (EG) the chain is Extracellular. The helical transmembrane segment at 838–855 (LSVLRSFRLLRVFKLAKS) threads the bilayer. Residues 856-871 (WPTLNMLIKIIGNSVG) lie on the Cytoplasmic side of the membrane. The helical transmembrane segment at 872–890 (ALGNLTLVLAIIVFIFAVV) threads the bilayer. At 891-919 (GMQLFGKSYKECVCKISQECKLPRWHMND) the chain is on the extracellular side. A disulfide bridge connects residues Cys-904 and Cys-910. An intramembrane region (pore-forming) is located at residues 920–940 (FFHSFLIVFRVLCGEWIETMW). Residues Glu-934 and Glu-937 each contribute to the Na(+) site. Over 941 to 953 (DCMEVAGQAMCLI) the chain is Extracellular. Cys-942 and Cys-951 are disulfide-bonded. A helical transmembrane segment spans residues 954-974 (VFMMVMVIGNLVVLNLFLALL). The Cytoplasmic segment spans residues 975 to 1197 (LSSFSADNLA…TCFLIVEHNW (223 aa)). Residues 1105–1146 (NLNTEDVSSESDPEGSKDKLDDTSSSEGSTIDIKPEVEEVPV) form a disordered region. The III repeat unit spans residues 1178–1493 (LGKSWWILRK…KKYYNAMKKL (316 aa)). The helical transmembrane segment at 1198–1215 (FETFIIFMILLSSGALAF) threads the bilayer. The Extracellular segment spans residues 1216-1228 (EDIYIEQRKTIRT). Residues 1229-1247 (ILEYADKVFTYIFILEMLL) traverse the membrane as a helical segment. Topologically, residues 1248–1261 (KWTAYGFVKFFTNA) are cytoplasmic. Residues 1262–1280 (WCWLDFLIVAVSLVSLIAN) form a helical membrane-spanning segment. The Extracellular segment spans residues 1281–1288 (ALGYSELG). Residues 1289–1307 (AIKSLRTLRALRPLRALSR) form a helical membrane-spanning segment. Topologically, residues 1308–1324 (FEGMRVVVNALVGAIPS) are cytoplasmic. A helical membrane pass occupies residues 1325–1344 (IMNVLLVCLIFWLIFSIMGV). Over 1345-1397 (NLFAGKYHYCFNETSEIRFEIDEVNNKTDCEKLMEGNNTEIRWKNVKINFDNV) the chain is Extracellular. Cys-1354 and Cys-1374 are joined by a disulfide. N-linked (GlcNAc...) asparagine glycosylation is found at Asn-1356, Asn-1370, and Asn-1381. Positions 1398-1419 (GAGYLALLQVATFKGWMDIMYA) form an intramembrane region, pore-forming. Over 1420-1436 (AVDSRKPDEQPDYEGNI) the chain is Extracellular. Residues 1437–1458 (YMYIYFVIFIIFGSFFTLNLFI) form a helical membrane-spanning segment. Topologically, residues 1459–1521 (GVIIDNFNQQ…IVFDFVTQQA (63 aa)) are cytoplasmic. A Phosphoserine; by PKC modification is found at Ser-1495. An IV repeat occupies 1502–1799 (IPRPLNKIQG…WEKFDPDATQ (298 aa)). A helical transmembrane segment spans residues 1522–1539 (FDIVIMMLICLNMVTMMV). The Extracellular segment spans residues 1540–1550 (ETDTQSKQMEN). Residues 1551-1569 (ILYWINLVFVIFFTCECVL) traverse the membrane as a helical segment. Residues 1570-1581 (KMFALRHYYFTI) lie on the Cytoplasmic side of the membrane. A helical transmembrane segment spans residues 1582-1599 (GWNIFDFVVVILSIVGMF). The Extracellular portion of the chain corresponds to 1600–1612 (LADIIEKYFVSPT). Residues 1613–1629 (LFRVIRLARIGRILRLI) form a helical membrane-spanning segment. Topologically, residues 1630–1648 (KGAKGIRTLLFALMMSLPA) are cytoplasmic. Residues 1649–1666 (LFNIGLLLFLVMFIFSIF) traverse the membrane as a helical segment. The Extracellular segment spans residues 1667–1688 (GMSNFAYVKHEAGIDDMFNFET). Positions 1689–1711 (FGNSMICLFQITTSAGWDGLLLP) form an intramembrane region, pore-forming. The Extracellular segment spans residues 1712–1740 (ILNRPPDCSLDKEHPGSGFKGDCGNPSVG). Cysteines 1719 and 1734 form a disulfide. The helical transmembrane segment at 1741–1763 (IFFFVSYIIISFLIVVNMYIAII) threads the bilayer. Residues 1764–1978 (LENFSVATEE…RQKEVRESKC (215 aa)) are Cytoplasmic-facing. The region spanning 1893–1922 (EEVSAVVLQRAYRGHLARRGFICRKITSNK) is the IQ domain. The disordered stretch occupies residues 1924–1978 (ENGGTHREKKESTPSTASLPSYDSVTKPDKEKQQRAEEGRRERAKRQKEVRESKC). Residues 1936 to 1947 (TPSTASLPSYDS) show a composition bias toward polar residues. Residues 1949 to 1978 (TKPDKEKQQRAEEGRRERAKRQKEVRESKC) show a composition bias toward basic and acidic residues.

It belongs to the sodium channel (TC 1.A.1.10) family. Nav1.6/SCN8A subfamily. In terms of assembly, the voltage-sensitive sodium channel consists of an ion-conducting pore-forming alpha subunit regulated by one or more beta-1 (SCN1B), beta-2 (SCN2B), beta-3 (SCN3B) and/or beta-4 (SCN4B) subunits. Beta-1 (SCN1B) and beta-3 (SCN3B) are non-covalently associated with alpha, while beta-2 (SCN2B) and beta-4 (SCN4B) are covalently linked by disulfide bonds. Interacts with FGF13. Interacts with NEDD4 and NEDD4L. Interacts with FGF14, GBG3, GBB2 and SCN1B. Interacts with TMEM233. Interacts with the conotoxin GVIIJ. Interacts with the scorpion toxin BMK M1. Interacts with CALM1; the interaction modulates the inactivation rate of SCN8A. May be ubiquitinated by NEDD4L; which would promote its endocytosis. In terms of processing, phosphorylation at Ser-1495 by PKC in a highly conserved cytoplasmic loop slows inactivation of the sodium channel and reduces peak sodium currents. In terms of tissue distribution, expressed in the hippocampus (at protein level). Expressed in brain, cerebellum and spinal cord. As to expression, expressed in non-neuronal tissues, such as monocytes/macrophages.

It is found in the cell membrane. The protein localises to the cell projection. It localises to the axon. Its subcellular location is the cytoplasmic vesicle. The protein resides in the podosome. It catalyses the reaction Na(+)(in) = Na(+)(out). In terms of biological role, pore-forming subunit of a voltage-gated sodium channel complex assuming opened or closed conformations in response to the voltage difference across membranes and through which sodium ions selectively pass along their electrochemical gradient. Contributes to neuronal excitability by regulating action potential threshold and propagation. More specifically expressed in non-neuronal cells, could play a role in sodium release from intracellular compartments and participate in the control of podosomes formation and macrophages adhesion and movement. In Mus musculus (Mouse), this protein is Sodium channel protein type 8 subunit alpha.